A 205-amino-acid polypeptide reads, in one-letter code: Holliday junction branch migration complex subunit RuvA (205 aa).

The segment at Met1–Arg64 is domain I. Residues Thr65–Val143 form a domain II region. Positions Gln144–Ala154 are flexible linker. The interval Ala154–Lys205 is domain III.

It belongs to the RuvA family. Homotetramer. Forms an RuvA(8)-RuvB(12)-Holliday junction (HJ) complex. HJ DNA is sandwiched between 2 RuvA tetramers; dsDNA enters through RuvA and exits via RuvB. An RuvB hexamer assembles on each DNA strand where it exits the tetramer. Each RuvB hexamer is contacted by two RuvA subunits (via domain III) on 2 adjacent RuvB subunits; this complex drives branch migration. In the full resolvosome a probable DNA-RuvA(4)-RuvB(12)-RuvC(2) complex forms which resolves the HJ.

It localises to the cytoplasm. Functionally, the RuvA-RuvB-RuvC complex processes Holliday junction (HJ) DNA during genetic recombination and DNA repair, while the RuvA-RuvB complex plays an important role in the rescue of blocked DNA replication forks via replication fork reversal (RFR). RuvA specifically binds to HJ cruciform DNA, conferring on it an open structure. The RuvB hexamer acts as an ATP-dependent pump, pulling dsDNA into and through the RuvAB complex. HJ branch migration allows RuvC to scan DNA until it finds its consensus sequence, where it cleaves and resolves the cruciform DNA. In Rhodopseudomonas palustris (strain BisB5), this protein is Holliday junction branch migration complex subunit RuvA.